The following is a 65-amino-acid chain: Large ribosomal subunit protein bL33m (65 aa).

Residues 1–8 constitute a mitochondrion transit peptide; it reads MFLSAVFF.

Belongs to the bacterial ribosomal protein bL33 family. As to quaternary structure, component of the mitochondrial large ribosomal subunit (mt-LSU). Mature mammalian 55S mitochondrial ribosomes consist of a small (28S) and a large (39S) subunit. The 28S small subunit contains a 12S ribosomal RNA (12S mt-rRNA) and 30 different proteins. The 39S large subunit contains a 16S rRNA (16S mt-rRNA), a copy of mitochondrial valine transfer RNA (mt-tRNA(Val)), which plays an integral structural role, and 52 different proteins.

Its subcellular location is the mitochondrion. The protein is Large ribosomal subunit protein bL33m (MRPL33) of Homo sapiens (Human).